Consider the following 247-residue polypeptide: 5'-nucleotidase SurE (247 aa).

Residues Asp8, Asp9, Ser39, and Asn91 each coordinate a divalent metal cation.

It belongs to the SurE nucleotidase family. It depends on a divalent metal cation as a cofactor.

The protein resides in the cytoplasm. The enzyme catalyses a ribonucleoside 5'-phosphate + H2O = a ribonucleoside + phosphate. In terms of biological role, nucleotidase that shows phosphatase activity on nucleoside 5'-monophosphates. This Nitrosomonas europaea (strain ATCC 19718 / CIP 103999 / KCTC 2705 / NBRC 14298) protein is 5'-nucleotidase SurE.